Consider the following 130-residue polypeptide: Protein p56 (130 aa).

This sequence belongs to the phi29likevirus protein p56 family. Homodimer. Interacts with host UDG; this interaction inhibits the uracil-DNA glycosylase.

Functionally, inhibits the host uracil-DNA glycosylase (UDG), an enzyme which removes uracil residues from DNA by the base excision repair. Interacts with host uracil-DNA glycosylase and prevents the latter from binding to DNA. Since the viral DNA polymerase efficiently incorporates dUMP into DNA, the virus needs to prevent the deleterious effect caused by host UDG when it eliminates uracil residues present in the viral genome. The polypeptide is Protein p56 (Bacillus phage GA-1 (Bacteriophage GA-1)).